Reading from the N-terminus, the 201-residue chain is Glutathione S-transferase GstA (201 aa).

The region spanning 1–81 is the GST N-terminal domain; the sequence is MKLFYKPGAC…YLADSVPDRQ (81 aa). Glutathione-binding positions include Cys-10, Lys-35, Val-52, 65–66, Asn-99, and 103–106; these read EG and TELH. The GST C-terminal domain maps to 87–201; that stretch reads NSISRYKTIE…QDALSAEGLK (115 aa).

The protein belongs to the GST superfamily. Beta family. In terms of assembly, homodimer.

The protein resides in the cytoplasm. The catalysed reaction is RX + glutathione = an S-substituted glutathione + a halide anion + H(+). Conjugation of reduced glutathione to a wide number of exogenous and endogenous hydrophobic electrophiles. The polypeptide is Glutathione S-transferase GstA (gstA) (Escherichia coli O157:H7).